We begin with the raw amino-acid sequence, 467 residues long: Congo red hypersensitive protein 2 (467 aa).

Residues 1 to 23 form the signal peptide; the sequence is MAIVNSWLICLVSIFSFVVRVEA. Asn-28 carries an N-linked (GlcNAc...) asparagine glycan. A disulfide bond links Cys-56 and Cys-67. The GH16 domain occupies 63–280; the sequence is SHDSCMPVPI…WSGGEINWDA (218 aa). The N-linked (GlcNAc...) asparagine glycan is linked to Asn-96. Residue Glu-166 is the Nucleophile of the active site. Glu-170 acts as the Proton donor in catalysis. Glu-170 provides a ligand contact to chitin. N-linked (GlcNAc...) asparagine glycans are attached at residues Asn-190, Asn-196, Asn-233, and Asn-237. Residue Trp-257 coordinates chitin. Asn-261 is a glycosylation site (N-linked (GlcNAc...) asparagine). Thr-268 is a binding site for chitin. Asn-297 and Asn-310 each carry an N-linked (GlcNAc...) asparagine glycan. Residues 337 to 444 form a disordered region; sequence MDSDEGSGLD…SSSTSSMSGN (108 aa). Residues 351 to 444 are compositionally biased toward low complexity; that stretch reads ATTSSTQKSS…SSSTSSMSGN (94 aa). Asn-445 carries GPI-anchor amidated asparagine lipidation. The propeptide at 446–467 is removed in mature form; it reads AGANVAANWRLTVLCVILGYVL.

Belongs to the glycosyl hydrolase 16 family. CRH1 subfamily. The GPI-anchor is attached to the protein in the endoplasmic reticulum and serves to target the protein to the cell surface. There, the glucosamine-inositol phospholipid moiety is cleaved off and the GPI-modified mannoprotein is covalently attached via its lipidless GPI glycan remnant to the 1,6-beta-glucan of the outer cell wall layer.

It localises to the secreted. The protein resides in the cell wall. The protein localises to the membrane. It carries out the reaction Random endo-hydrolysis of N-acetyl-beta-D-glucosaminide (1-&gt;4)-beta-linkages in chitin and chitodextrins.. Functionally, dual chitinase/transglycosylase that plays a role in cell wall architecture. Chitinase and transglycosylase activities are coupled. Required for the polysaccharide cross-linking at the septa and the cell wall. More specifically, transfers chitin to both beta(1-3)- and beta(1-6)glucan in the cell wall. The minimal number of intact hexopyranose units required in the molecule of the acceptor oligosaccharide is two and the effectivity of the acceptor increased with the increasing length of its oligosaccharide chain. The protein is Congo red hypersensitive protein 2 of Saccharomyces cerevisiae (strain ATCC 204508 / S288c) (Baker's yeast).